The chain runs to 182 residues: Crossover junction endodeoxyribonuclease RuvC (182 aa).

Residues Asp-7, Glu-69, and Asp-141 contribute to the active site. Mg(2+) is bound by residues Asp-7, Glu-69, and Asp-141.

It belongs to the RuvC family. In terms of assembly, homodimer which binds Holliday junction (HJ) DNA. The HJ becomes 2-fold symmetrical on binding to RuvC with unstacked arms; it has a different conformation from HJ DNA in complex with RuvA. In the full resolvosome a probable DNA-RuvA(4)-RuvB(12)-RuvC(2) complex forms which resolves the HJ. It depends on Mg(2+) as a cofactor.

The protein resides in the cytoplasm. The enzyme catalyses Endonucleolytic cleavage at a junction such as a reciprocal single-stranded crossover between two homologous DNA duplexes (Holliday junction).. Its function is as follows. The RuvA-RuvB-RuvC complex processes Holliday junction (HJ) DNA during genetic recombination and DNA repair. Endonuclease that resolves HJ intermediates. Cleaves cruciform DNA by making single-stranded nicks across the HJ at symmetrical positions within the homologous arms, yielding a 5'-phosphate and a 3'-hydroxyl group; requires a central core of homology in the junction. The consensus cleavage sequence is 5'-(A/T)TT(C/G)-3'. Cleavage occurs on the 3'-side of the TT dinucleotide at the point of strand exchange. HJ branch migration catalyzed by RuvA-RuvB allows RuvC to scan DNA until it finds its consensus sequence, where it cleaves and resolves the cruciform DNA. This Polaromonas sp. (strain JS666 / ATCC BAA-500) protein is Crossover junction endodeoxyribonuclease RuvC.